A 485-amino-acid polypeptide reads, in one-letter code: Forkhead box protein N3 (485 aa).

The segment at 1 to 21 (MGPVMPPSKKPESPGISVSSG) is disordered. Phosphoserine occurs at positions 83, 85, and 97. The segment at 86 to 108 (PVQDLDDDTPPSPAHSDMPYDAR) is disordered. The fork-head DNA-binding region spans 114-210 (KPPYSFSCLI…QALKKTPYHS (97 aa)). A disordered region spans residues 315–454 (RTESEPSCGS…DEEMKEAAGS (140 aa)). The segment covering 338–359 (SSAKSSHARSTSPASDCVSSSS) has biased composition (low complexity). Over residues 382-404 (HESHSETEEDDRKCSPKEAKDAL) the composition is skewed to basic and acidic residues. The segment covering 412–424 (QHKKRQHFAKARK) has biased composition (basic residues). At serine 443 the chain carries Phosphoserine.

In terms of assembly, interacts through its C-terminus with the C-terminus of SNW1/SKIP.

The protein resides in the nucleus. In terms of biological role, acts as a transcriptional repressor. May be involved in DNA damage-inducible cell cycle arrests (checkpoints). The chain is Forkhead box protein N3 (FOXN3) from Sus scrofa (Pig).